The primary structure comprises 319 residues: Acetyl esterase (319 aa).

Residues 91 to 93 (HGG) carry the Involved in the stabilization of the negatively charged intermediate by the formation of the oxyanion hole motif. Catalysis depends on residues S165, D262, and H292.

The protein belongs to the 'GDXG' lipolytic enzyme family. As to quaternary structure, homodimer. Interacts with MalT and MelA.

It is found in the cytoplasm. Displays esterase activity towards short chain fatty esters (acyl chain length of up to 8 carbons). Able to hydrolyze triacetylglycerol (triacetin) and tributyrylglycerol (tributyrin), but not trioleylglycerol (triolein) or cholesterol oleate. Negatively regulates MalT activity by antagonizing maltotriose binding. Inhibits MelA galactosidase activity. The protein is Acetyl esterase of Escherichia coli O9:H4 (strain HS).